Consider the following 337-residue polypeptide: Holliday junction branch migration complex subunit RuvB (337 aa).

The tract at residues 4–186 (ADRLIHPQII…FGIPLRLEFY (183 aa)) is large ATPase domain (RuvB-L). Residues Arg-26, Gly-67, Lys-70, Thr-71, Thr-72, 133–135 (EDY), Arg-176, Tyr-186, and Arg-223 each bind ATP. Mg(2+) is bound at residue Thr-71. Positions 187–257 (NVKDLSSIVA…IAEAALDMLD (71 aa)) are small ATPAse domain (RuvB-S). A head domain (RuvB-H) region spans residues 260 to 337 (AEGFDYMDRK…NHFNIIKPDA (78 aa)). Residues Arg-296, Arg-315, and Arg-320 each coordinate DNA.

Belongs to the RuvB family. Homohexamer. Forms an RuvA(8)-RuvB(12)-Holliday junction (HJ) complex. HJ DNA is sandwiched between 2 RuvA tetramers; dsDNA enters through RuvA and exits via RuvB. An RuvB hexamer assembles on each DNA strand where it exits the tetramer. Each RuvB hexamer is contacted by two RuvA subunits (via domain III) on 2 adjacent RuvB subunits; this complex drives branch migration. In the full resolvosome a probable DNA-RuvA(4)-RuvB(12)-RuvC(2) complex forms which resolves the HJ.

It is found in the cytoplasm. It catalyses the reaction ATP + H2O = ADP + phosphate + H(+). In terms of biological role, the RuvA-RuvB-RuvC complex processes Holliday junction (HJ) DNA during genetic recombination and DNA repair, while the RuvA-RuvB complex plays an important role in the rescue of blocked DNA replication forks via replication fork reversal (RFR). RuvA specifically binds to HJ cruciform DNA, conferring on it an open structure. The RuvB hexamer acts as an ATP-dependent pump, pulling dsDNA into and through the RuvAB complex. RuvB forms 2 homohexamers on either side of HJ DNA bound by 1 or 2 RuvA tetramers; 4 subunits per hexamer contact DNA at a time. Coordinated motions by a converter formed by DNA-disengaged RuvB subunits stimulates ATP hydrolysis and nucleotide exchange. Immobilization of the converter enables RuvB to convert the ATP-contained energy into a lever motion, pulling 2 nucleotides of DNA out of the RuvA tetramer per ATP hydrolyzed, thus driving DNA branch migration. The RuvB motors rotate together with the DNA substrate, which together with the progressing nucleotide cycle form the mechanistic basis for DNA recombination by continuous HJ branch migration. Branch migration allows RuvC to scan DNA until it finds its consensus sequence, where it cleaves and resolves cruciform DNA. In Shewanella halifaxensis (strain HAW-EB4), this protein is Holliday junction branch migration complex subunit RuvB.